A 120-amino-acid chain; its full sequence is NAD(P)H-quinone oxidoreductase subunit 3 (120 aa).

The next 3 membrane-spanning stretches (helical) occupy residues 10-30, 64-84, and 89-109; these read FLGFLLIAAAVPVLALVTNLI, MFALVFVIFDVETVFLYPWAV, and LGLLAFIEALIFIAILVIALA.

This sequence belongs to the complex I subunit 3 family. NDH-1 can be composed of about 15 different subunits; different subcomplexes with different compositions have been identified which probably have different functions.

The protein resides in the cellular thylakoid membrane. The enzyme catalyses a plastoquinone + NADH + (n+1) H(+)(in) = a plastoquinol + NAD(+) + n H(+)(out). It carries out the reaction a plastoquinone + NADPH + (n+1) H(+)(in) = a plastoquinol + NADP(+) + n H(+)(out). Its function is as follows. NDH-1 shuttles electrons from an unknown electron donor, via FMN and iron-sulfur (Fe-S) centers, to quinones in the respiratory and/or the photosynthetic chain. The immediate electron acceptor for the enzyme in this species is believed to be plastoquinone. Couples the redox reaction to proton translocation, and thus conserves the redox energy in a proton gradient. Cyanobacterial NDH-1 also plays a role in inorganic carbon-concentration. This is NAD(P)H-quinone oxidoreductase subunit 3 from Prochlorococcus marinus (strain MIT 9301).